A 442-amino-acid chain; its full sequence is Probable diguanylate cyclase DgcI (442 aa).

The first 23 residues, 1-23 (MSRINKFVLTVSLLIFIMISAVA), serve as a signal peptide directing secretion. Cysteine 24 carries the N-palmitoyl cysteine lipid modification. Cysteine 24 carries S-diacylglycerol cysteine lipidation. Residues 231–251 (LIIFFAALVAVISGASCLYLV) form a helical membrane-spanning segment. Residues 319 to 442 (KGGYLCLFDV…KNGRAQISWQ (124 aa)) form the GGDEF domain. Aspartate 327 contacts Mg(2+). Substrate is bound by residues asparagine 335, histidine 340, and aspartate 344. Aspartate 371 lines the Mg(2+) pocket.

In terms of assembly, homodimer. It depends on Mg(2+) as a cofactor.

Its subcellular location is the cell membrane. The enzyme catalyses 2 GTP = 3',3'-c-di-GMP + 2 diphosphate. The protein operates within purine metabolism; 3',5'-cyclic di-GMP biosynthesis. Functionally, catalyzes the synthesis of cyclic-di-GMP (c-di-GMP) via the condensation of 2 GTP molecules. The chain is Probable diguanylate cyclase DgcI from Escherichia coli (strain K12).